We begin with the raw amino-acid sequence, 693 residues long: Elongation factor G (693 aa).

One can recognise a tr-type G domain in the interval 8–282; sequence EKTRNIGIMA…AVIDYLPSPL (275 aa). GTP-binding positions include 17–24, 81–85, and 135–138; these read AHVDAGKT, DTPGH, and NKMD.

This sequence belongs to the TRAFAC class translation factor GTPase superfamily. Classic translation factor GTPase family. EF-G/EF-2 subfamily.

It localises to the cytoplasm. Functionally, catalyzes the GTP-dependent ribosomal translocation step during translation elongation. During this step, the ribosome changes from the pre-translocational (PRE) to the post-translocational (POST) state as the newly formed A-site-bound peptidyl-tRNA and P-site-bound deacylated tRNA move to the P and E sites, respectively. Catalyzes the coordinated movement of the two tRNA molecules, the mRNA and conformational changes in the ribosome. The sequence is that of Elongation factor G from Streptococcus pneumoniae (strain CGSP14).